A 647-amino-acid chain; its full sequence is DNA mismatch repair protein MutL (647 aa).

Residues 387-400 (SAKPVHEATDEKAE) are compositionally biased toward basic and acidic residues. The interval 387–412 (SAKPVHEATDEKAEPQSTSVKFAERK) is disordered.

Belongs to the DNA mismatch repair MutL/HexB family.

This protein is involved in the repair of mismatches in DNA. It is required for dam-dependent methyl-directed DNA mismatch repair. May act as a 'molecular matchmaker', a protein that promotes the formation of a stable complex between two or more DNA-binding proteins in an ATP-dependent manner without itself being part of a final effector complex. The sequence is that of DNA mismatch repair protein MutL from Streptococcus sanguinis (strain SK36).